We begin with the raw amino-acid sequence, 147 residues long: Putative pre-16S rRNA nuclease (147 aa).

Belongs to the YqgF nuclease family.

The protein localises to the cytoplasm. Functionally, could be a nuclease involved in processing of the 5'-end of pre-16S rRNA. This chain is Putative pre-16S rRNA nuclease, found in Latilactobacillus sakei subsp. sakei (strain 23K) (Lactobacillus sakei subsp. sakei).